The sequence spans 455 residues: GTPase Der (455 aa).

EngA-type G domains are found at residues 4-169 and 178-353; these read PIVA…PPKH and IQMA…EQHR. GTP is bound by residues 10–17, 57–61, 120–123, 184–191, 231–235, and 296–299; these read GRPNVGKS, DTGGL, NKCE, DTAGI, and NKWD. Residues 354 to 439 form the KH-like domain; the sequence is RRVSTSVVNE…PLKLFWRGKQ (86 aa).

This sequence belongs to the TRAFAC class TrmE-Era-EngA-EngB-Septin-like GTPase superfamily. EngA (Der) GTPase family. As to quaternary structure, associates with the 50S ribosomal subunit.

Its function is as follows. GTPase that plays an essential role in the late steps of ribosome biogenesis. The polypeptide is GTPase Der (Prochlorococcus marinus (strain MIT 9313)).